The following is a 1647-amino-acid chain: Putative RNA exonuclease pqe-1 (1647 aa).

Disordered stretches follow at residues 1–199 (MFNG…QVQN), 274–393 (QTPA…TSLP), 515–619 (MMQQ…KPVI), and 641–665 (QVKQ…PTAR). Low complexity-rich tracts occupy residues 30–64 (GPSQ…SGAS) and 99–131 (TQPQ…AAAA). Residues 143-170 (SREQGNAHQPTAGQIPQSSNQPAQQTHN) are compositionally biased toward polar residues. Low complexity-rich tracts occupy residues 274–297 (QTPA…NPQQ) and 515–526 (MMQQQAMQMQMQ). Residues 527 to 540 (NPPPVHQQPPPQQP) are compositionally biased toward pro residues. Positions 541 to 555 (PQQQRQKQQRSQPAP) are enriched in low complexity. Residues 592–601 (SKIEPVDVKP) show a composition bias toward basic and acidic residues. Over residues 650–664 (SSTSDATKSDAAPTA) the composition is skewed to low complexity. The stretch at 686-726 (SAKKFERMKAEAEDKEDMKKKIAALQEALFNIQEERRVEKE) forms a coiled coil. A compositionally biased stretch (polar residues) spans 736-756 (AVPQNQPASSVQIAQVSTSES). Residues 736–1174 (AVPQNQPASS…LRNKKHTTEE (439 aa)) are disordered. Positions 761–772 (TSEAAATETMTS) are enriched in low complexity. The segment covering 783–793 (TEGEQEEDEDE) has biased composition (acidic residues). Over residues 822–833 (RSDEKREKRHVS) the composition is skewed to basic and acidic residues. The segment covering 878–905 (DNEDDDADSFVVGDDEPIEYEEEDEDDM) has biased composition (acidic residues). Over residues 977-992 (TPTASSSMSSSTLSYC) the composition is skewed to low complexity. A compositionally biased stretch (basic and acidic residues) spans 1018 to 1031 (KTREENRERKRLAQ). Residues 1038 to 1054 (SETTGVRRTLRSTQDNS) show a composition bias toward polar residues. Composition is skewed to basic and acidic residues over residues 1076-1088 (AKSS…EKQK) and 1139-1174 (NHTE…TTEE). Residues 1142-1187 (EMLDKRNKESEEKRRKDRDELERLRNKKHTTEEEKIKMARLQNALK) adopt a coiled-coil conformation. The Exonuclease domain maps to 1477–1637 (RVYALDCEMV…IFYGLRNPES (161 aa)).

The protein belongs to the REXO1/REXO3 family. As to expression, expressed in the excretory canal, vulval cells, the intestine and in head and tail neurons including ASH, RIC and AIZ neurons.

It localises to the nucleus. Its function is as follows. Putative RNA exonuclease which protects neurons from the toxic effects of expanded poly-Q disease proteins. It is unknown whether this is via participation in the pathogenic mechanism underlying poly-Q-induced neurodegeneration or if it is by acting as a genetic modifier of the age of onset or progression of neurodegeneration. Regulates gene expression in neurons. This chain is Putative RNA exonuclease pqe-1, found in Caenorhabditis elegans.